The sequence spans 1449 residues: Gag-Pol polyprotein (1449 aa).

A lipid anchor (N-myristoyl glycine; by host) is attached at Gly2. The tract at residues 7-31 (VLTGGKLDQWESIYLRPGGKKKYRM) is interaction with Gp41. The interval 8 to 43 (LTGGKLDQWESIYLRPGGKKKYRMKHLVWASRELER) is interaction with host CALM1. The interval 12–19 (KLDQWESI) is interaction with host AP3D1. The interaction with membrane phosphatidylinositol 4,5-bisphosphate and RNA stretch occupies residues 14-33 (DQWESIYLRPGGKKKYRMKH). Residues 16 to 22 (WESIYLR) carry the Nuclear export signal motif. Positions 26–32 (KKKYRMK) match the Nuclear localization signal motif. Residues 73–77 (EELRS) are interaction with membrane phosphatidylinositol 4,5-bisphosphate. At Tyr134 the chain carries Phosphotyrosine; by host. The interaction with human PPIA/CYPA and NUP153 stretch occupies residues 191–229 (NTVGGHQAAMQMLKEVINEEAADWDRTHPVPVGPLPPGQ). Residues 279–365 (YSPVSILEIK…GGPAHKARVL (87 aa)) form a dimerization/Multimerization of capsid protein p24 region. 2 consecutive CCHC-type zinc fingers follow at residues 393-410 (IKCF…NCKA) and 414-431 (GGCW…DCKN). Basic and acidic residues predominate over residues 447–461 (ETRKLPPDNNKERAH). A disordered region spans residues 447-489 (ETRKLPPDNNKERAHSPATRELWVSGGEEHTGEGDAGEPGEDR). The dimerization of protease stretch occupies residues 499–503 (PQITL). Residues 518–587 (REALLDTGAD…TPVNIIGRNL (70 aa)) enclose the Peptidase A2 domain. Asp523 serves as the catalytic For protease activity; shared with dimeric partner. Dimerization of protease regions lie at residues 547 to 553 (GIGGFIK) and 586 to 598 (NLLT…LNFP). The Reverse transcriptase domain occupies 641–831 (EGKISRIGPE…PPFLWMGYEL (191 aa)). Asp707, Asp782, and Asp783 together coordinate Mg(2+). The RT 'primer grip' stretch occupies residues 824 to 832 (FLWMGYELH). The short motif at 995-1011 (WEAWWTDHWQATWIPEW) is the Tryptophan repeat motif element. In terms of domain architecture, RNase H type-1 spans 1031–1154 (ISGAETFYVD…VDKLVSSGIR (124 aa)). The Mg(2+) site is built by Asp1040, Glu1075, Asp1095, and Asp1146. The Integrase-type zinc-finger motif lies at 1160-1201 (DGIEKAQEDHDRYHSNWKAMASDFNLPPIVAKEIVASCDKCQ). Residues His1169, His1173, Cys1197, and Cys1200 each coordinate Zn(2+). One can recognise an Integrase catalytic domain in the interval 1211 to 1361 (VNCSPGVWQL…TAGERIIDII (151 aa)). 3 residues coordinate Mg(2+): Asp1221, Asp1273, and Glu1309. Positions 1380 to 1427 (FRVYYRDSRDPIWKGPAKLLWKGEGAVVIQDNGDIKVVPRRKAKIIRD) form a DNA-binding region, integrase-type.

In terms of assembly, homotrimer; further assembles as hexamers of trimers. Interacts with gp41 (via C-terminus). Interacts with host CALM1; this interaction induces a conformational change in the Matrix protein, triggering exposure of the myristate group. Interacts with host AP3D1; this interaction allows the polyprotein trafficking to multivesicular bodies during virus assembly. Part of the pre-integration complex (PIC) which is composed of viral genome, matrix protein, Vpr and integrase. Homodimer; the homodimer further multimerizes as homohexamers or homopentamers. Interacts with human PPIA/CYPA; This interaction stabilizes the capsid. Interacts with human NUP153. Interacts with host PDZD8; this interaction stabilizes the capsid. Interacts with monkey TRIM5; this interaction destabilizes the capsid. As to quaternary structure, homodimer, whose active site consists of two apposed aspartic acid residues. In terms of assembly, heterodimer of p66 RT and p51 RT (RT p66/p51). Heterodimerization of RT is essential for DNA polymerase activity. The overall folding of the subdomains is similar in p66 RT and p51 RT but the spatial arrangements of the subdomains are dramatically different. Homotetramer; may further associate as a homohexadecamer. Part of the pre-integration complex (PIC) which is composed of viral genome, matrix protein, Vpr and integrase. Interacts with human SMARCB1/INI1 and human PSIP1/LEDGF isoform 1. Interacts with human KPNA3; this interaction might play a role in nuclear import of the pre-integration complex. Interacts with human NUP153; this interaction might play a role in nuclear import of the pre-integration complex. It depends on Mg(2+) as a cofactor. Specific enzymatic cleavages by the viral protease yield mature proteins. The protease is released by autocatalytic cleavage. The polyprotein is cleaved during and after budding, this process is termed maturation. Proteolytic cleavage of p66 RT removes the RNase H domain to yield the p51 RT subunit. Nucleocapsid protein p7 might be further cleaved after virus entry. In terms of processing, tyrosine phosphorylated presumably in the virion by a host kinase. Phosphorylation is apparently not a major regulator of membrane association. Post-translationally, phosphorylated possibly by host MAPK1; this phosphorylation is necessary for Pin1-mediated virion uncoating. Methylated by host PRMT6, impairing its function by reducing RNA annealing and the initiation of reverse transcription.

It localises to the host cell membrane. The protein localises to the host endosome. It is found in the host multivesicular body. The protein resides in the virion membrane. Its subcellular location is the host nucleus. It localises to the host cytoplasm. The protein localises to the virion. The catalysed reaction is Specific for a P1 residue that is hydrophobic, and P1' variable, but often Pro.. It carries out the reaction Endohydrolysis of RNA in RNA/DNA hybrids. Three different cleavage modes: 1. sequence-specific internal cleavage of RNA. Human immunodeficiency virus type 1 and Moloney murine leukemia virus enzymes prefer to cleave the RNA strand one nucleotide away from the RNA-DNA junction. 2. RNA 5'-end directed cleavage 13-19 nucleotides from the RNA end. 3. DNA 3'-end directed cleavage 15-20 nucleotides away from the primer terminus.. The enzyme catalyses 3'-end directed exonucleolytic cleavage of viral RNA-DNA hybrid.. It catalyses the reaction DNA(n) + a 2'-deoxyribonucleoside 5'-triphosphate = DNA(n+1) + diphosphate. With respect to regulation, protease: The viral protease is inhibited by many synthetic protease inhibitors (PIs), such as amprenavir, atazanavir, indinavir, loprinavir, nelfinavir, ritonavir and saquinavir. Use of protease inhibitors in tritherapy regimens permit more ambitious therapeutic strategies. Reverse transcriptase/ribonuclease H: RT can be inhibited either by nucleoside RT inhibitors (NRTIs) or by non nucleoside RT inhibitors (NNRTIs). NRTIs act as chain terminators, whereas NNRTIs inhibit DNA polymerization by binding a small hydrophobic pocket near the RT active site and inducing an allosteric change in this region. Classical NRTIs are abacavir, adefovir (PMEA), didanosine (ddI), lamivudine (3TC), stavudine (d4T), tenofovir (PMPA), zalcitabine (ddC), and zidovudine (AZT). Classical NNRTIs are atevirdine (BHAP U-87201E), delavirdine, efavirenz (DMP-266), emivirine (I-EBU), and nevirapine (BI-RG-587). The tritherapies used as a basic effective treatment of AIDS associate two NRTIs and one NNRTI. In terms of biological role, mediates, with Gag polyprotein, the essential events in virion assembly, including binding the plasma membrane, making the protein-protein interactions necessary to create spherical particles, recruiting the viral Env proteins, and packaging the genomic RNA via direct interactions with the RNA packaging sequence (Psi). Gag-Pol polyprotein may regulate its own translation, by the binding genomic RNA in the 5'-UTR. At low concentration, the polyprotein would promote translation, whereas at high concentration, the polyprotein would encapsidate genomic RNA and then shut off translation. Targets the polyprotein to the plasma membrane via a multipartite membrane-binding signal, that includes its myristoylated N-terminus. Matrix protein is part of the pre-integration complex. Implicated in the release from host cell mediated by Vpu. Binds to RNA. Functionally, forms the conical core that encapsulates the genomic RNA-nucleocapsid complex in the virion. Most core are conical, with only 7% tubular. The core is constituted by capsid protein hexamer subunits. The core is disassembled soon after virion entry. Host restriction factors such as TRIM5-alpha or TRIMCyp bind retroviral capsids and cause premature capsid disassembly, leading to blocks in reverse transcription. Capsid restriction by TRIM5 is one of the factors which restricts HIV-1 to the human species. Host PIN1 apparently facilitates the virion uncoating. On the other hand, interactions with PDZD8 or CYPA stabilize the capsid. Its function is as follows. Encapsulates and protects viral dimeric unspliced genomic RNA (gRNA). Binds these RNAs through its zinc fingers. Acts as a nucleic acid chaperone which is involved in rearangement of nucleic acid secondary structure during gRNA retrotranscription. Also facilitates template switch leading to recombination. As part of the polyprotein, participates in gRNA dimerization, packaging, tRNA incorporation and virion assembly. In terms of biological role, aspartyl protease that mediates proteolytic cleavages of Gag and Gag-Pol polyproteins during or shortly after the release of the virion from the plasma membrane. Cleavages take place as an ordered, step-wise cascade to yield mature proteins. This process is called maturation. Displays maximal activity during the budding process just prior to particle release from the cell. Also cleaves Nef and Vif, probably concomitantly with viral structural proteins on maturation of virus particles. Hydrolyzes host EIF4GI and PABP1 in order to shut off the capped cellular mRNA translation. The resulting inhibition of cellular protein synthesis serves to ensure maximal viral gene expression and to evade host immune response. Also mediates cleavage of host YTHDF3. Mediates cleavage of host CARD8, thereby activating the CARD8 inflammasome, leading to the clearance of latent HIV-1 in patient CD4(+) T-cells after viral reactivation; in contrast, HIV-1 can evade CARD8-sensing when its protease remains inactive in infected cells prior to viral budding. Multifunctional enzyme that converts the viral RNA genome into dsDNA in the cytoplasm, shortly after virus entry into the cell. This enzyme displays a DNA polymerase activity that can copy either DNA or RNA templates, and a ribonuclease H (RNase H) activity that cleaves the RNA strand of RNA-DNA heteroduplexes in a partially processive 3' to 5' endonucleasic mode. Conversion of viral genomic RNA into dsDNA requires many steps. A tRNA(3)-Lys binds to the primer-binding site (PBS) situated at the 5'-end of the viral RNA. RT uses the 3' end of the tRNA primer to perform a short round of RNA-dependent minus-strand DNA synthesis. The reading proceeds through the U5 region and ends after the repeated (R) region which is present at both ends of viral RNA. The portion of the RNA-DNA heteroduplex is digested by the RNase H, resulting in a ssDNA product attached to the tRNA primer. This ssDNA/tRNA hybridizes with the identical R region situated at the 3' end of viral RNA. This template exchange, known as minus-strand DNA strong stop transfer, can be either intra- or intermolecular. RT uses the 3' end of this newly synthesized short ssDNA to perform the RNA-dependent minus-strand DNA synthesis of the whole template. RNase H digests the RNA template except for two polypurine tracts (PPTs) situated at the 5'-end and near the center of the genome. It is not clear if both polymerase and RNase H activities are simultaneous. RNase H probably can proceed both in a polymerase-dependent (RNA cut into small fragments by the same RT performing DNA synthesis) and a polymerase-independent mode (cleavage of remaining RNA fragments by free RTs). Secondly, RT performs DNA-directed plus-strand DNA synthesis using the PPTs that have not been removed by RNase H as primers. PPTs and tRNA primers are then removed by RNase H. The 3' and 5' ssDNA PBS regions hybridize to form a circular dsDNA intermediate. Strand displacement synthesis by RT to the PBS and PPT ends produces a blunt ended, linear dsDNA copy of the viral genome that includes long terminal repeats (LTRs) at both ends. Functionally, catalyzes viral DNA integration into the host chromosome, by performing a series of DNA cutting and joining reactions. This enzyme activity takes place after virion entry into a cell and reverse transcription of the RNA genome in dsDNA. The first step in the integration process is 3' processing. This step requires a complex comprising the viral genome, matrix protein, Vpr and integrase. This complex is called the pre-integration complex (PIC). The integrase protein removes 2 nucleotides from each 3' end of the viral DNA, leaving recessed CA OH's at the 3' ends. In the second step, the PIC enters cell nucleus. This process is mediated through integrase and Vpr proteins, and allows the virus to infect a non dividing cell. This ability to enter the nucleus is specific of lentiviruses, other retroviruses cannot and rely on cell division to access cell chromosomes. In the third step, termed strand transfer, the integrase protein joins the previously processed 3' ends to the 5' ends of strands of target cellular DNA at the site of integration. The 5'-ends are produced by integrase-catalyzed staggered cuts, 5 bp apart. A Y-shaped, gapped, recombination intermediate results, with the 5'-ends of the viral DNA strands and the 3' ends of target DNA strands remaining unjoined, flanking a gap of 5 bp. The last step is viral DNA integration into host chromosome. This involves host DNA repair synthesis in which the 5 bp gaps between the unjoined strands are filled in and then ligated. Since this process occurs at both cuts flanking the HIV genome, a 5 bp duplication of host DNA is produced at the ends of HIV-1 integration. Alternatively, Integrase may catalyze the excision of viral DNA just after strand transfer, this is termed disintegration. The polypeptide is Gag-Pol polyprotein (gag-pol) (Human immunodeficiency virus type 1 group N (isolate YBF30) (HIV-1)).